A 45-amino-acid polypeptide reads, in one-letter code: Cytochrome b559 subunit beta (45 aa).

Residues 20-36 (WIAVHTLAVPTVFFLGA) form a helical membrane-spanning segment. His24 serves as a coordination point for heme.

The protein belongs to the PsbE/PsbF family. Heterodimer of an alpha subunit and a beta subunit. PSII is composed of 1 copy each of membrane proteins PsbA, PsbB, PsbC, PsbD, PsbE, PsbF, PsbH, PsbI, PsbJ, PsbK, PsbL, PsbM, PsbT, PsbX, PsbY, PsbZ, Psb30/Ycf12, peripheral proteins PsbO, CyanoQ (PsbQ), PsbU, PsbV and a large number of cofactors. It forms dimeric complexes. Requires heme b as cofactor.

It is found in the cellular thylakoid membrane. Its function is as follows. This b-type cytochrome is tightly associated with the reaction center of photosystem II (PSII). PSII is a light-driven water:plastoquinone oxidoreductase that uses light energy to abstract electrons from H(2)O, generating O(2) and a proton gradient subsequently used for ATP formation. It consists of a core antenna complex that captures photons, and an electron transfer chain that converts photonic excitation into a charge separation. The sequence is that of Cytochrome b559 subunit beta from Nostoc sp. (strain PCC 7120 / SAG 25.82 / UTEX 2576).